We begin with the raw amino-acid sequence, 86 residues long: Large ribosomal subunit protein uL23 (86 aa).

This sequence belongs to the universal ribosomal protein uL23 family. As to quaternary structure, part of the 50S ribosomal subunit. Contacts protein L29.

In terms of biological role, binds to 23S rRNA. One of the proteins that surrounds the polypeptide exit tunnel on the outside of the ribosome. The protein is Large ribosomal subunit protein uL23 of Thermococcus gammatolerans (strain DSM 15229 / JCM 11827 / EJ3).